The sequence spans 120 residues: 5-hydroxyisourate hydrolase 2 (120 aa).

Substrate-binding residues include His-10, Arg-48, and Tyr-117.

The protein belongs to the transthyretin family. 5-hydroxyisourate hydrolase subfamily. As to quaternary structure, homotetramer.

The enzyme catalyses 5-hydroxyisourate + H2O = 5-hydroxy-2-oxo-4-ureido-2,5-dihydro-1H-imidazole-5-carboxylate + H(+). Its function is as follows. Catalyzes the hydrolysis of 5-hydroxyisourate (HIU) to 2-oxo-4-hydroxy-4-carboxy-5-ureidoimidazoline (OHCU). The polypeptide is 5-hydroxyisourate hydrolase 2 (Rhizobium meliloti (strain 1021) (Ensifer meliloti)).